The chain runs to 625 residues: Tumor necrosis factor receptor superfamily member 11A (625 aa).

The N-terminal stretch at 1–30 (MAPRARRRRQLPAPLLALCVLLVPLQVTLQ) is a signal peptide. The Extracellular portion of the chain corresponds to 31–214 (VTPPCTQERH…PKEAQAYLPS (184 aa)). Cystine bridges form between Cys-35-Cys-47, Cys-48-Cys-61, Cys-51-Cys-69, Cys-72-Cys-87, Cys-93-Cys-113, Cys-115-Cys-128, Cys-125-Cys-127, Cys-134-Cys-152, and Cys-155-Cys-170. 4 TNFR-Cys repeats span residues 35–69 (CTQERHYEHLGRCCSRCEPGKYLSSKCTPTSDSVC), 72–113 (CGPD…PRRC), 115–152 (CTAGYHWNSDCECCRRNTECAPGFGAQHPLQLNKDTVC), and 155–195 (CLLG…DVVC). Asn-106 carries N-linked (GlcNAc...) asparagine glycosylation. 5 residues coordinate Na(+): Cys-134, Ala-135, Phe-138, Ser-161, and Val-163. Asn-175 carries an N-linked (GlcNAc...) asparagine glycan. Cys-176 and Cys-195 are joined by a disulfide. Residues 215–234 (LIVLLLFISVVVVAAIIFGV) form a helical membrane-spanning segment. Topologically, residues 235–625 (YYRKGGKALT…HTQGSGQCAE (391 aa)) are cytoplasmic. Disordered regions lie at residues 331 to 356 (TQGDLSRKIPTEDEYTDRPSQPSTGS), 388 to 413 (GTESTVDSEGCDFTEPPSRTDSMPVS), and 479 to 524 (SMAE…FISS). The segment covering 499–511 (SGSSPSDQPPASG) has biased composition (low complexity). Residues 512–524 (NVTGNSNSTFISS) are compositionally biased toward polar residues. The interval 532 to 537 (GDIIVV) is required for interaction with EEIG1 and osteoclast differentiation. Residues 542–625 (TSQEGPGSAE…HTQGSGQCAE (84 aa)) are disordered. Residues 543–558 (SQEGPGSAEPESEPVG) are compositionally biased toward low complexity. Basic and acidic residues predominate over residues 561 to 571 (VQEETLAHRDS). A Phosphoserine modification is found at Ser-571. Residues 603-625 (RPVQEQGGAQTSLHTQGSGQCAE) are compositionally biased toward polar residues.

Binds to the clefts between the subunits of the TNFSF11 ligand trimer to form a heterohexamer. Part of a complex composed of EEIG1, TNFRSF11A/RANK, PLCG2, GAB2, TEC and BTK; complex formation increases in the presence of TNFSF11/RANKL. Interacts with TRAF1, TRAF2, TRAF3, TRAF5 and TRAF6. Interacts (via cytoplasmic domain) with GAB2. Interacts (via cytoplasmic domain); with EEIG1 (via N-terminus); when in the presence of TNFSF11/RANKL. Ubiquitous expression with high levels in trabecular bone, thymus, small intestine, lung, brain and kidney. Weakly expressed in spleen and bone marrow.

The protein localises to the cell membrane. The protein resides in the membrane raft. In terms of biological role, receptor for TNFSF11/RANKL/TRANCE/OPGL; essential for RANKL-mediated osteoclastogenesis. Its interaction with EEIG1 promotes osteoclastogenesis via facilitating the transcription of NFATC1 and activation of PLCG2. Involved in the regulation of interactions between T-cells and dendritic cells. This chain is Tumor necrosis factor receptor superfamily member 11A (Tnfrsf11a), found in Mus musculus (Mouse).